A 30-amino-acid polypeptide reads, in one-letter code: Putative alpha-amylase inhibitor (30 aa).

The protein belongs to the leguminous lectin family.

In terms of biological role, lectin and alpha-amylase inhibitor. Acts as a defensive protein against insects. The chain is Putative alpha-amylase inhibitor from Phaseolus vulgaris (Kidney bean).